A 1048-amino-acid chain; its full sequence is Integrin alpha-V (1048 aa).

The N-terminal stretch at 1–30 (MAFPPRRRLRLGPRGLPLLLSGLLLPLCRA) is a signal peptide. At 31-992 (FNLDVESPAE…WGIQPAPMPV (962 aa)) the chain is on the extracellular side. 7 FG-GAP repeats span residues 32 to 98 (NLDV…RRCQ), 109 to 170 (DYAK…VEYA), 173 to 225 (RSKN…VSKY), 237 to 291 (QLAT…GKNM), 292 to 357 (SSLH…GDFQ), 358 to 415 (TIKL…GLNA), and 419 to 482 (QILE…VYPS). Asn-74 carries N-linked (GlcNAc...) asparagine glycosylation. 3 cysteine pairs are disulfide-bonded: Cys-89-Cys-97, Cys-138-Cys-158, and Cys-172-Cys-185. Asp-260, Asn-262, Asp-264, Ile-266, and Asp-268 together coordinate Ca(2+). Residues Asn-290 and Asn-296 are each glycosylated (N-linked (GlcNAc...) asparagine). Ca(2+) is bound by residues Asp-314, Asn-316, Asp-318, Tyr-320, Asp-322, Asp-379, Asp-381, Asp-383, Phe-385, Asp-387, Asp-443, Asp-445, Asn-447, Tyr-449, and Asp-451. The N-linked (GlcNAc...) asparagine glycan is linked to Asn-488. 2 cysteine pairs are disulfide-bonded: Cys-491–Cys-502 and Cys-508–Cys-565. Asn-554 and Asn-615 each carry an N-linked (GlcNAc...) asparagine glycan. 2 disulfides stabilise this stretch: Cys-626/Cys-632 and Cys-698/Cys-711. 4 N-linked (GlcNAc...) asparagine glycosylation sites follow: Asn-704, Asn-835, Asn-851, and Asn-874. 2 disulfide bridges follow: Cys-852/Cys-914 and Cys-904/Cys-909. N-linked (GlcNAc...) asparagine glycosylation is found at Asn-945, Asn-973, and Asn-980. Residues 993 to 1016 (PVWVIILAVLAGLLLLAVLVFVMY) form a helical membrane-spanning segment. Residues 1017–1048 (RMGFFKRVRPPQEEQEREQLQPHENGEGNSET) are Cytoplasmic-facing. The short motif at 1019-1023 (GFFKR) is the GFFKR motif element. Positions 1027-1042 (PQEEQEREQLQPHENG) are enriched in basic and acidic residues. Positions 1027–1048 (PQEEQEREQLQPHENGEGNSET) are disordered.

This sequence belongs to the integrin alpha chain family. Heterodimer of an alpha and a beta subunit. The alpha subunit is composed of a heavy and a light chain linked by a disulfide bond. Alpha-V (ITGAV) associates with either beta-1 (ITGB1), beta-3 (ITGB3), beta-5 (ITGB5), beta-6 (ITGB6) or beta-8 (ITGB8). Interacts with RAB25. Interacts with CIB1. Integrins ITGAV:ITGB3 and ITGAV:ITGB5 interact with FBLN5 (via N-terminus). ITGAV:ITGB3 and ITGAV:ITGB5 interact with CCN3. ITGAV:ITGB3 interacts with ADGRA2. ITGAV:ITGB3 interacts with FGF2; it is likely that FGF2 can simultaneously bind ITGAV:ITGB3 and FGF receptors. ITGAV:ITGB3 interacts with SELP (via C-type lectin domain); the interaction mediates cell-cell interaction and adhesion. ITGAV:ITGB3 is found in a ternary complex with CX3CR1 and CX3CL1. ITGAV:ITGB3 is found in a ternary complex with NRG1 and ERBB3. ITGAV:ITGB3 is found in a ternary complex with FGF1 and FGFR1. ITGAV:ITGB3 is found in a ternary complex with IGF1 and IGF1R. ITGAV:ITGB3 interacts with IGF2. ITGAV:ITGB3 and ITGAV:ITGB6 interact with FBN1. ITGAV:ITGB3 interacts with CD9, CD81 and CD151 (via second extracellular domain). ITGAV:ITGB6 interacts with TGFB1. ITGAV:ITGB3 interacts with PTN. Forms a complex with PTPRZ1 and PTN that stimulates endothelial cell migration through ITGB3 'Tyr-773' phosphorylation. Interacts with TM4SF19. In terms of assembly, (Microbial infection) Alpha-V/beta-6 and alpha-V/beta-3 bind to foot-and-mouth disease virus (FMDV) VP1 protein and acts as a receptor for this virus.

The protein resides in the cell membrane. The protein localises to the cell junction. It localises to the focal adhesion. Functionally, the alpha-V (ITGAV) integrins are receptors for vitronectin, cytotactin, fibronectin, fibrinogen, laminin, matrix metalloproteinase-2, osteopontin, osteomodulin, prothrombin, thrombospondin, TGFB1 and vWF. They recognize the sequence R-G-D in a wide array of ligands. Alpha-V integrins may play a role in embryo implantation, angiogenesis and wound healing. ITGAV:ITGB3 binds to fractalkine (CX3CL1) and may act as its coreceptor in CX3CR1-dependent fractalkine signaling. ITGAV:ITGB3 binds to NRG1 (via EGF domain) and this binding is essential for NRG1-ERBB signaling. ITGAV:ITGB3 binds to FGF1 and this binding is essential for FGF1 signaling. ITGAV:ITGB3 binds to FGF2 and this binding is essential for FGF2 signaling. ITGAV:ITGB3 binds to IGF1 and this binding is essential for IGF1 signaling. ITGAV:ITGB3 binds to IGF2 and this binding is essential for IGF2 signaling. ITGAV:ITGB3 binds to IL1B and this binding is essential for IL1B signaling. ITGAV:ITGB3 binds to PLA2G2A via a site (site 2) which is distinct from the classical ligand-binding site (site 1) and this induces integrin conformational changes and enhanced ligand binding to site 1. ITGAV:ITGB3 and ITGAV:ITGB6 act as receptors for fibrillin-1 (FBN1) and mediate R-G-D-dependent cell adhesion to FBN1. Integrin alpha-V/beta-6 or alpha-V/beta-8 (ITGAV:ITGB6 or ITGAV:ITGB8) mediates R-G-D-dependent release of transforming growth factor beta-1 (TGF-beta-1) from regulatory Latency-associated peptide (LAP), thereby playing a key role in TGF-beta-1 activation. ITGAV:ITGB3 acts as a receptor for CD40LG. ITGAV:ITGB3 acts as a receptor for IBSP and promotes cell adhesion and migration to IBSP. This chain is Integrin alpha-V (ITGAV), found in Bos taurus (Bovine).